A 134-amino-acid polypeptide reads, in one-letter code: Profilin-3 (134 aa).

A disulfide bond links C13 and C118. The short motif at 84-100 (AVIRGKKGSGGITSKKT) is the Involved in PIP2 interaction element. T114 bears the Phosphothreonine mark.

This sequence belongs to the profilin family. As to quaternary structure, occurs in many kinds of cells as a complex with monomeric actin in a 1:1 ratio. Post-translationally, phosphorylated by MAP kinases.

It localises to the cytoplasm. The protein resides in the cytoskeleton. Binds to actin and affects the structure of the cytoskeleton. At high concentrations, profilin prevents the polymerization of actin, whereas it enhances it at low concentrations. This is Profilin-3 from Olea europaea (Common olive).